Reading from the N-terminus, the 362-residue chain is 45 kDa calcium-binding protein (362 aa).

The first 36 residues, 1–36 (MVWPWVAMASRWGPLIGLAPCCLWLLGAVLLMDASA), serve as a signal peptide directing secretion. An N-linked (GlcNAc...) asparagine glycan is attached at asparagine 40. 2 consecutive EF-hand domains span residues 98–133 (RSRR…KTAE) and 137–172 (EAME…SKGH). Serine 99 carries the phosphoserine modification. Aspartate 111, asparagine 113, aspartate 115, lysine 117, glutamate 122, aspartate 150, aspartate 152, aspartate 154, histidine 156, and glutamate 161 together coordinate Ca(2+). A Phosphothreonine modification is found at threonine 193. EF-hand domains are found at residues 197-232 (LENL…HSRG), 233-268 (MLRF…TVEN), 278-313 (WVKD…MNEY), and 314-349 (NALN…FTGS). Residue aspartate 213 coordinates Ca(2+). Threonine 217 carries the post-translational modification Phosphothreonine. 6 residues coordinate Ca(2+): glutamate 220, aspartate 246, aspartate 248, aspartate 250, glutamine 252, and glutamate 257. Threonine 265 is modified (phosphothreonine). The Ca(2+) site is built by aspartate 291, asparagine 293, and aspartate 295. Threonine 299 is modified (phosphothreonine). Ca(2+)-binding residues include glutamate 302, aspartate 327, asparagine 329, asparagine 331, histidine 333, and glutamate 338. The tract at residues 309-362 (PMNEYNALNEAKQMIAVADENQNHHLEPEEVLKYSEFFTGSKLVDYARSVHEEF) is necessary for intracellular retention in Golgi apparatus lumen.

The protein belongs to the CREC family. In terms of assembly, isoform 5 interacts with STXBP1; the interaction is enhanced in presence of calcium. Isoform 5 interacts with STX3. Ubiquitous. Isoform 5 is expressed in pancreas.

It is found in the golgi apparatus lumen. The protein localises to the cytoplasm. It localises to the cell membrane. The protein resides in the cell projection. Its subcellular location is the bleb. In terms of biological role, may regulate calcium-dependent activities in the endoplasmic reticulum lumen or post-ER compartment. Functionally, isoform 5 may be involved in the exocytosis of zymogens by pancreatic acini. The protein is 45 kDa calcium-binding protein (SDF4) of Homo sapiens (Human).